The chain runs to 420 residues: Sulfate adenylyltransferase (420 aa).

It belongs to the sulfate adenylyltransferase family.

It catalyses the reaction sulfate + ATP + H(+) = adenosine 5'-phosphosulfate + diphosphate. Its pathway is sulfur metabolism; hydrogen sulfide biosynthesis; sulfite from sulfate: step 1/3. The protein is Sulfate adenylyltransferase of Desulforudis audaxviator (strain MP104C).